Consider the following 236-residue polypeptide: Leucyl/phenylalanyl-tRNA--protein transferase (236 aa).

This sequence belongs to the L/F-transferase family.

The protein resides in the cytoplasm. It carries out the reaction N-terminal L-lysyl-[protein] + L-leucyl-tRNA(Leu) = N-terminal L-leucyl-L-lysyl-[protein] + tRNA(Leu) + H(+). The catalysed reaction is N-terminal L-arginyl-[protein] + L-leucyl-tRNA(Leu) = N-terminal L-leucyl-L-arginyl-[protein] + tRNA(Leu) + H(+). It catalyses the reaction L-phenylalanyl-tRNA(Phe) + an N-terminal L-alpha-aminoacyl-[protein] = an N-terminal L-phenylalanyl-L-alpha-aminoacyl-[protein] + tRNA(Phe). Functions in the N-end rule pathway of protein degradation where it conjugates Leu, Phe and, less efficiently, Met from aminoacyl-tRNAs to the N-termini of proteins containing an N-terminal arginine or lysine. This is Leucyl/phenylalanyl-tRNA--protein transferase from Shewanella halifaxensis (strain HAW-EB4).